Here is an 810-residue protein sequence, read N- to C-terminus: Transducer protein CosT (810 aa).

The Cytoplasmic segment spans residues 1 to 38 (MSEPTADAGDNSPSSTDTAPLDRVKAIALLPLRSYLVK). Residues 39–59 (FAVALLVILVIIAAGGFWVQA) traverse the membrane as a helical segment. At 60–323 (DATATLEANT…AFALSNQIRT (264 aa)) the chain is on the extracellular side. A helical membrane pass occupies residues 324–344 (GILGFILVALVGVVLVGGTIG). The 53-residue stretch at 345–397 (RNTAAAVQSLSAAAAEIEAGNYDVDVASSRRDEIGQLFASIGSMRDALVTQID) folds into the HAMP 1 domain. At 345–810 (RNTAAAVQSL…DRDVTPTQTD (466 aa)) the chain is on the cytoplasmic side. The segment at 403 to 427 (REQATEAQQDAEAERERAEDARERA) is disordered. Residues 414-427 (EAERERAEDARERA) are compositionally biased toward basic and acidic residues. Residues 439–493 (AELEAQAERYSDVMAACADGDLTRRMPADDTDNEAMAAIAASFNEMLAQWEHTII) form the HAMP 2 domain. One can recognise a Methyl-accepting transducer domain in the interval 512–748 (GAADAERASG…EAVSMTEEVA (237 aa)). Glutamate methyl ester (Glu) is present on residues E556 and E739. The interval 751 to 784 (SDSTAGEAQSVSAAAEEQAASMSEISDSVESLSG) is disordered. The span at 755–774 (AGEAQSVSAAAEEQAASMSE) shows a compositional bias: low complexity. A compositionally biased stretch (polar residues) spans 775 to 784 (ISDSVESLSG).

This sequence belongs to the methyl-accepting chemotaxis (MCP) protein family. Methylated by CheR.

It is found in the cell membrane. Mediates chemotaxis towards compatible osmolytes. Probably transduces the signal from the substrate-binding protein CosB to the histidine kinase CheA. In Halobacterium salinarum (strain ATCC 700922 / JCM 11081 / NRC-1) (Halobacterium halobium), this protein is Transducer protein CosT (cosT).